The sequence spans 73 residues: ATP synthase subunit c (73 aa).

2 helical membrane passes run 4–24 (LAIGAAIAALTGIGAGVGIGI) and 51–71 (GALAEATAIYGLLVAIMIIIF).

The protein belongs to the ATPase C chain family. In terms of assembly, F-type ATPases have 2 components, F(1) - the catalytic core - and F(0) - the membrane proton channel. F(1) has five subunits: alpha(3), beta(3), gamma(1), delta(1), epsilon(1). F(0) has three main subunits: a(1), b(2) and c(10-14). The alpha and beta chains form an alternating ring which encloses part of the gamma chain. F(1) is attached to F(0) by a central stalk formed by the gamma and epsilon chains, while a peripheral stalk is formed by the delta and b chains.

It localises to the cell membrane. Functionally, f(1)F(0) ATP synthase produces ATP from ADP in the presence of a proton or sodium gradient. F-type ATPases consist of two structural domains, F(1) containing the extramembraneous catalytic core and F(0) containing the membrane proton channel, linked together by a central stalk and a peripheral stalk. During catalysis, ATP synthesis in the catalytic domain of F(1) is coupled via a rotary mechanism of the central stalk subunits to proton translocation. In terms of biological role, key component of the F(0) channel; it plays a direct role in translocation across the membrane. A homomeric c-ring of between 10-14 subunits forms the central stalk rotor element with the F(1) delta and epsilon subunits. This is ATP synthase subunit c from Caldanaerobacter subterraneus subsp. tengcongensis (strain DSM 15242 / JCM 11007 / NBRC 100824 / MB4) (Thermoanaerobacter tengcongensis).